The following is a 411-amino-acid chain: Peptidase T (411 aa).

Residue His-78 participates in Zn(2+) binding. Asp-80 is an active-site residue. Asp-140 is a binding site for Zn(2+). The active-site Proton acceptor is the Glu-173. Residues Glu-174, Asp-196, and His-379 each coordinate Zn(2+).

This sequence belongs to the peptidase M20B family. The cofactor is Zn(2+).

It localises to the cytoplasm. The catalysed reaction is Release of the N-terminal residue from a tripeptide.. Cleaves the N-terminal amino acid of tripeptides. This is Peptidase T from Yersinia pseudotuberculosis serotype O:1b (strain IP 31758).